A 406-amino-acid polypeptide reads, in one-letter code: D-alanyl-D-alanine carboxypeptidase (406 aa).

The N-terminal stretch at 1-31 (MVSGTVGRGTALGAVLLALLAVPAQAGTAAA) is a signal peptide. The active-site Acyl-ester intermediate is Ser93. Substrate is bound by residues 151-154 (FAQT), 190-192 (YSN), Arg316, 330-332 (TGT), and 357-358 (SN). A propeptide spanning residues 381 to 406 (AKLRSATSSATTVERHEDIAPGIARD) is cleaved from the precursor. The disordered stretch occupies residues 387–406 (TSSATTVERHEDIAPGIARD). Residues 393–406 (VERHEDIAPGIARD) show a composition bias toward basic and acidic residues.

Belongs to the peptidase S12 family.

The protein localises to the secreted. It carries out the reaction Preferential cleavage: (Ac)2-L-Lys-D-Ala-|-D-Ala. Also transpeptidation of peptidyl-alanyl moieties that are N-acyl substituents of D-alanine.. Its pathway is cell wall biogenesis; peptidoglycan biosynthesis. Its function is as follows. Catalyzes distinct carboxypeptidation and transpeptidation reactions during the last stages of wall peptidoglycan synthesis. Mistaking a beta-lactam antibiotic molecule for a normal substrate (i.e. a D-alanyl-D-alanine-terminated peptide), it becomes immobilized in the form of a long-lived, serine-ester-linked acyl enzyme and thus behave as penicillin-binding protein (PBP). This chain is D-alanyl-D-alanine carboxypeptidase, found in Streptomyces sp. (strain R61).